A 294-amino-acid polypeptide reads, in one-letter code: Farnesyl diphosphate synthase (294 aa).

Residues lysine 45, arginine 48, and histidine 77 each contribute to the isopentenyl diphosphate site. Aspartate 84 and aspartate 90 together coordinate Mg(2+). Arginine 95 contributes to the (2E)-geranyl diphosphate binding site. Arginine 96 lines the isopentenyl diphosphate pocket. (2E)-geranyl diphosphate contacts are provided by lysine 181, threonine 182, and glutamine 220.

Belongs to the FPP/GGPP synthase family. Mg(2+) serves as cofactor.

Its subcellular location is the cytoplasm. The catalysed reaction is isopentenyl diphosphate + (2E)-geranyl diphosphate = (2E,6E)-farnesyl diphosphate + diphosphate. The sequence is that of Farnesyl diphosphate synthase (ispA) from Buchnera aphidicola subsp. Schizaphis graminum (strain Sg).